Reading from the N-terminus, the 265-residue chain is Phosphonates import ATP-binding protein PhnC 1 (265 aa).

The ABC transporter domain maps to 3–247; that stretch reads LRLSAIDLRH…HLDTLYANEQ (245 aa). 36-43 contributes to the ATP binding site; it reads GPSGAGKT.

Belongs to the ABC transporter superfamily. Phosphonates importer (TC 3.A.1.9.1) family. The complex is composed of two ATP-binding proteins (PhnC), two transmembrane proteins (PhnE) and a solute-binding protein (PhnD).

It localises to the cell inner membrane. The enzyme catalyses phosphonate(out) + ATP + H2O = phosphonate(in) + ADP + phosphate + H(+). In terms of biological role, part of the ABC transporter complex PhnCDE involved in phosphonates import. Responsible for energy coupling to the transport system. This Pseudomonas syringae pv. tomato (strain ATCC BAA-871 / DC3000) protein is Phosphonates import ATP-binding protein PhnC 1.